The primary structure comprises 393 residues: Formate-dependent phosphoribosylglycinamide formyltransferase (393 aa).

N(1)-(5-phospho-beta-D-ribosyl)glycinamide-binding positions include 22–23 and E82; that span reads EL. Residues R114, K155, 160-165, 195-198, and E203 contribute to the ATP site; these read SSGKGQ and EGFV. One can recognise an ATP-grasp domain in the interval 119–308; that stretch reads RLAAEDLGIP…EFALHLRAIL (190 aa). Residues E267 and E279 each contribute to the Mg(2+) site. N(1)-(5-phospho-beta-D-ribosyl)glycinamide is bound by residues D286, K356, and 363–364; that span reads RR.

Belongs to the PurK/PurT family. In terms of assembly, homodimer.

The enzyme catalyses N(1)-(5-phospho-beta-D-ribosyl)glycinamide + formate + ATP = N(2)-formyl-N(1)-(5-phospho-beta-D-ribosyl)glycinamide + ADP + phosphate + H(+). It functions in the pathway purine metabolism; IMP biosynthesis via de novo pathway; N(2)-formyl-N(1)-(5-phospho-D-ribosyl)glycinamide from N(1)-(5-phospho-D-ribosyl)glycinamide (formate route): step 1/1. In terms of biological role, involved in the de novo purine biosynthesis. Catalyzes the transfer of formate to 5-phospho-ribosyl-glycinamide (GAR), producing 5-phospho-ribosyl-N-formylglycinamide (FGAR). Formate is provided by PurU via hydrolysis of 10-formyl-tetrahydrofolate. The protein is Formate-dependent phosphoribosylglycinamide formyltransferase of Hydrogenovibrio crunogenus (strain DSM 25203 / XCL-2) (Thiomicrospira crunogena).